We begin with the raw amino-acid sequence, 330 residues long: Thioredoxin domain-containing protein 6 (330 aa).

The Thioredoxin domain maps to 11-115 (QVNISTQELW…QKTILDQLEA (105 aa)). The segment at 157 to 303 (ERTCTLAIIK…LFPSLKFSDK (147 aa)) is NDK. The disordered stretch occupies residues 300–330 (FSDKDTEAPQGGEAEATAGPTEALCFPEDVD). Positions 307-322 (APQGGEAEATAGPTEA) are enriched in low complexity.

It belongs to the NDK family. Monomer and homodimer. As to expression, detected at very low levels in testis, lung and brain.

It localises to the cytoplasm. The protein resides in the cytoskeleton. It is found in the cilium axoneme. Its subcellular location is the dynein axonemal particle. May be a regulator of microtubule physiology. The protein is Thioredoxin domain-containing protein 6 of Homo sapiens (Human).